Reading from the N-terminus, the 500-residue chain is Maturase K (500 aa).

Belongs to the intron maturase 2 family. MatK subfamily.

It localises to the plastid. Its subcellular location is the chloroplast. Usually encoded in the trnK tRNA gene intron. Probably assists in splicing its own and other chloroplast group II introns. This chain is Maturase K, found in Prunus laurocerasus (Cherry laurel).